The chain runs to 501 residues: Cytochrome P450 4c21 (501 aa).

Positions 309 and 447 each coordinate heme.

It belongs to the cytochrome P450 family. Heme is required as a cofactor.

It is found in the endoplasmic reticulum membrane. It localises to the microsome membrane. It catalyses the reaction an organic molecule + reduced [NADPH--hemoprotein reductase] + O2 = an alcohol + oxidized [NADPH--hemoprotein reductase] + H2O + H(+). This Blattella germanica (German cockroach) protein is Cytochrome P450 4c21 (CYP4C21).